The sequence spans 629 residues: Tudor and KH domain-containing protein homolog (629 aa).

The chain crosses the membrane as a helical span at residues 9 to 29 (LPIALGLSLVTVTAFVAYYVL). KH domains follow at residues 46-109 (INTI…ETLI) and 119-185 (IMSE…KKLV). The segment at 198-240 (IEQSKRPPRHSSSPPSPCPSPGDRDADADAQGDVDHTRVKYKR) is disordered. Residues 219-240 (GDRDADADAQGDVDHTRVKYKR) show a composition bias toward basic and acidic residues. In terms of domain architecture, Tudor spans 297 to 362 (HVSVGQVVAA…CELRADLLRL (66 aa)). Residues 464–526 (PAPSPRPSPP…GDDSKDKDGI (63 aa)) form a disordered region.

Belongs to the Tdrkh family. Interacts with (symmetrically methylated) Siwi. Interacts with (symmetrically methylated) Ago3. Interacts with PNLDC1/trimmer; interaction takes place on the mitochondrial surface and recruits PNLDC1/trimmer to Siwi-bound pre-piRNAs.

Its subcellular location is the mitochondrion outer membrane. Participates in the primary piRNA biogenesis pathway and is required during spermatogenesis to repress transposable elements and prevent their mobilization, which is essential for the germline integrity. The piRNA metabolic process mediates the repression of transposable elements during meiosis by forming complexes composed of piRNAs and Piwi proteins (Siwi or Ago3) and govern the methylation and subsequent repression of transposons. Required for the final steps of primary piRNA biogenesis by participating in the processing of 31-37 nt intermediates into mature piRNAs: acts by recruiting the exonuclease PNLDC1/trimmer to Siwi-bound pre-piRNAs. In Bombyx mori (Silk moth), this protein is Tudor and KH domain-containing protein homolog.